A 122-amino-acid chain; its full sequence is Small ribosomal subunit protein uS12c (122 aa).

The protein belongs to the universal ribosomal protein uS12 family. In terms of assembly, part of the 30S ribosomal subunit.

The protein localises to the plastid. It localises to the chloroplast. Functionally, with S4 and S5 plays an important role in translational accuracy. Located at the interface of the 30S and 50S subunits. The protein is Small ribosomal subunit protein uS12c (rps12) of Cyanidioschyzon merolae (strain NIES-3377 / 10D) (Unicellular red alga).